The sequence spans 532 residues: Apolipoprotein N-acyltransferase (532 aa).

A run of 6 helical transmembrane segments spans residues 37–57 (IFVAGFVSFPVLVWLIDGAIA), 75–95 (WWFGFGYFVSGLWWIGTALLV), 106–126 (LAVLGLPAFLALFYAFAAMIA), 128–148 (LLWSDGLGRILALAFGFALAE), 179–199 (VIGLVGMSALAVFVFAAPALL), and 207–227 (TGIGLAIFLALAHVGFGAWTL). In terms of domain architecture, CN hydrolase spans 245–494 (VQPSIAQAMK…VGVVDSYLPS (250 aa)). Glu-289 acts as the Proton acceptor in catalysis. Lys-353 is a catalytic residue. The Nucleophile role is filled by Cys-406. A helical membrane pass occupies residues 505–525 (GWIQTVLILLTLLAASVGLIL).

Belongs to the CN hydrolase family. Apolipoprotein N-acyltransferase subfamily.

It is found in the cell inner membrane. It carries out the reaction N-terminal S-1,2-diacyl-sn-glyceryl-L-cysteinyl-[lipoprotein] + a glycerophospholipid = N-acyl-S-1,2-diacyl-sn-glyceryl-L-cysteinyl-[lipoprotein] + a 2-acyl-sn-glycero-3-phospholipid + H(+). It participates in protein modification; lipoprotein biosynthesis (N-acyl transfer). Its function is as follows. Catalyzes the phospholipid dependent N-acylation of the N-terminal cysteine of apolipoprotein, the last step in lipoprotein maturation. The polypeptide is Apolipoprotein N-acyltransferase (Brucella suis biovar 1 (strain 1330)).